The following is a 338-amino-acid chain: Endonuclease V (338 aa).

The Mg(2+) site is built by Asp52 and Asp126. The segment at 253 to 338 is disordered; that stretch reads QLGVAPAQRK…PSPAWVQSPP (86 aa). Composition is skewed to basic and acidic residues over residues 260–270 and 287–323; these read QRKDRSQKEQR and RPPE…HQED. Positions 328-338 are enriched in pro residues; the sequence is PPSPAWVQSPP.

It belongs to the endonuclease V family. Monomer. Interacts with PABPC1; the interaction is RNA-dependent and stimulates ENDOV activity. Requires Mg(2+) as cofactor. In terms of tissue distribution, highest levels detected in liver with high levels also found in heart, kidney and testis. Expressed at low levels in brain.

It is found in the cytoplasm. Its subcellular location is the nucleus. The protein resides in the nucleolus. The protein localises to the stress granule. Its function is as follows. Endoribonuclease that specifically cleaves inosine-containing RNAs: cleaves RNA at the second phosphodiester bond 3' to inosine. Active against both single-stranded and double-stranded RNAs. Has strong preference for single-stranded RNAs (ssRNAs) toward double-stranded RNAs (dsRNAs). Cleaves mRNAs and tRNAs containing inosine. Also able to cleave structure-specific dsRNA substrates containing the specific sites 5'-IIUI-3' and 5'-UIUU-3'. Inosine is present in a number of RNAs following editing; the function of inosine-specific endoribonuclease is still unclear: it could either play a regulatory role in edited RNAs, or be involved in antiviral response by removing the hyperedited long viral dsRNA genome that has undergone A-to-I editing. Binds branched DNA structures. The protein is Endonuclease V (Endov) of Mus musculus (Mouse).